The primary structure comprises 423 residues: Histidine--tRNA ligase (423 aa).

Belongs to the class-II aminoacyl-tRNA synthetase family. Homodimer.

It localises to the cytoplasm. It carries out the reaction tRNA(His) + L-histidine + ATP = L-histidyl-tRNA(His) + AMP + diphosphate + H(+). This is Histidine--tRNA ligase from Staphylococcus haemolyticus (strain JCSC1435).